The primary structure comprises 318 residues: tRNA uridine(34) hydroxylase (318 aa).

Residues 123–217 (EDDDTVIIDA…YGKDPETKGQ (95 aa)) enclose the Rhodanese domain. Catalysis depends on C177, which acts as the Cysteine persulfide intermediate.

It belongs to the TrhO family.

It catalyses the reaction uridine(34) in tRNA + AH2 + O2 = 5-hydroxyuridine(34) in tRNA + A + H2O. Its function is as follows. Catalyzes oxygen-dependent 5-hydroxyuridine (ho5U) modification at position 34 in tRNAs. In Staphylococcus aureus (strain MRSA252), this protein is tRNA uridine(34) hydroxylase.